The sequence spans 235 residues: MKDELFKQSPKKQFEFDKSVASVFDDMINRSVPFYRENLELCGNLLAKILSTNASVCDLGCSSANFLIFLANLRKDFKLFGVDNSASMLEVAKSKAKAYGLDISFFEANLCEFDFFVCDVFVANYTMQFIRPPKRQELLDKIYKNLNSKGILIMSEKILYEDAFLSKNIIELYADYKEKQGYSKFEIAAKREALENVLIPYSQKENLNMLEKAGFKKIESIFKWANFETFIAFKD.

S-adenosyl-L-methionine contacts are provided by residues tyrosine 35, 60–62 (GCS), 83–84 (DN), asparagine 124, and arginine 191.

Belongs to the class I-like SAM-binding methyltransferase superfamily. Cx-SAM synthase family. Homodimer.

The enzyme catalyses prephenate + S-adenosyl-L-methionine = carboxy-S-adenosyl-L-methionine + 3-phenylpyruvate + H2O. Catalyzes the conversion of S-adenosyl-L-methionine (SAM) to carboxy-S-adenosyl-L-methionine (Cx-SAM). This chain is Carboxy-S-adenosyl-L-methionine synthase, found in Campylobacter jejuni subsp. jejuni serotype O:23/36 (strain 81-176).